Reading from the N-terminus, the 307-residue chain is Dihydroorotate dehydrogenase B (NAD(+)), catalytic subunit (307 aa).

Residues Ser22 and 46 to 47 (KA) each bind FMN. Residues Lys46 and 70 to 74 (NAIGL) contribute to the substrate site. Residues Asn102 and Asn130 each contribute to the FMN site. Asn130 is a substrate binding site. Residue Cys133 is the Nucleophile of the active site. FMN is bound by residues Lys168 and Ile194. 195–196 (NT) provides a ligand contact to substrate. Residues Gly220, 246–247 (GG), and 268–269 (GT) contribute to the FMN site.

It belongs to the dihydroorotate dehydrogenase family. Type 1 subfamily. As to quaternary structure, heterotetramer of 2 PyrK and 2 PyrD type B subunits. FMN serves as cofactor.

The protein resides in the cytoplasm. The enzyme catalyses (S)-dihydroorotate + NAD(+) = orotate + NADH + H(+). Its pathway is pyrimidine metabolism; UMP biosynthesis via de novo pathway; orotate from (S)-dihydroorotate (NAD(+) route): step 1/1. Its function is as follows. Catalyzes the conversion of dihydroorotate to orotate with NAD(+) as electron acceptor. The protein is Dihydroorotate dehydrogenase B (NAD(+)), catalytic subunit (pyrD) of Latilactobacillus sakei subsp. sakei (strain 23K) (Lactobacillus sakei subsp. sakei).